The chain runs to 599 residues: Kelch-like protein 41a (599 aa).

Positions 32-102 (VDCILKVGDR…LYSADIDITD (71 aa)) constitute a BTB domain. A BACK domain is found at 137–239 (CLAIFRMGLV…PEKYLKEKVE (103 aa)). Kelch repeat units follow at residues 339-391 (LLYV…EFEN), 393-440 (LFAV…SQNG), 441-488 (LVYC…VHKG), 489-535 (KIVV…SVDG), and 537-591 (LYAV…SMRL).

It is found in the cytoplasm. The protein localises to the cytoskeleton. It localises to the sarcoplasmic reticulum membrane. Its subcellular location is the endoplasmic reticulum membrane. In terms of biological role, involved in skeletal muscle development and differentiation. The protein is Kelch-like protein 41a (klhl41a) of Danio rerio (Zebrafish).